An 84-amino-acid chain; its full sequence is Hepcidin (84 aa).

An N-terminal signal peptide occupies residues 1 to 24 (MALSSQIWAACLLLLLLLASLTSG). A propeptide spanning residues 25–54 (SVFPQQTGQLAELQPQDRAGARAGWTPMLQ) is cleaved from the precursor. Cystine bridges form between Cys69–Cys72, Cys70–Cys78, and Cys73–Cys81.

Belongs to the hepcidin family. In terms of assembly, interacts with SLC40A1; this interaction promotes SLC40A1 rapid ubiquitination.

It localises to the secreted. Functionally, liver-produced hormone that constitutes the main circulating regulator of iron absorption and distribution across tissues. Acts by promoting endocytosis and degradation of ferroportin/SLC40A1, leading to the retention of iron in iron-exporting cells and decreased flow of iron into plasma. Controls the major flows of iron into plasma: absorption of dietary iron in the intestine, recycling of iron by macrophages, which phagocytose old erythrocytes and other cells, and mobilization of stored iron from hepatocytes. Its function is as follows. Has strong antimicrobial activity against E.coli ML35P N.cinerea and weaker against S.epidermidis, S.aureus and group b streptococcus bacteria. Active against the fungus C.albicans. No activity against P.aeruginosa. The chain is Hepcidin (HAMP) from Pongo abelii (Sumatran orangutan).